The primary structure comprises 318 residues: Probable 3-hydroxyisobutyrate dehydrogenase-like 3, mitochondrial (318 aa).

NAD(+) is bound by residues 35-64 (TRIGWIGIGIMGSAMVSHIIAAGYSVTVYA) and Ser-129. Residue Lys-203 is part of the active site. Lys-271 is an NAD(+) binding site.

It belongs to the HIBADH-related family. 3-hydroxyisobutyrate dehydrogenase subfamily.

The protein resides in the mitochondrion. The enzyme catalyses 3-hydroxy-2-methylpropanoate + NAD(+) = 2-methyl-3-oxopropanoate + NADH + H(+). It participates in amino-acid degradation; L-valine degradation. The protein is Probable 3-hydroxyisobutyrate dehydrogenase-like 3, mitochondrial of Arabidopsis thaliana (Mouse-ear cress).